Here is a 469-residue protein sequence, read N- to C-terminus: E3 ubiquitin-protein ligase TRIM21 (469 aa).

The RING-type zinc finger occupies C16 to R55. The B box-type zinc-finger motif lies at P87–I128. Zn(2+) is bound by residues C92, H95, C114, and H120. A coiled-coil region spans residues I128 to Q245. S266 is subject to Phosphoserine. Positions D268–T467 constitute a B30.2/SPRY domain.

This sequence belongs to the TRIM/RBCC family. In terms of assembly, homotrimer. Interacts (via C-terminus) with IRF8 (via C-terminus). Component of a SCF(SKP2)-like complex containing CUL1, SKP1, TRIM21 and SKP2. Interacts with CALR, CUL1, FBXW11, HSPA5, IKBKB, IRF3, SKP1 and VCP. Interacts with SKP2; the interaction with SKP2 does not depend on an intact F-box domain. Interacts (via N-terminus and C-terminus) with DCP2 (via N-terminus and C-terminus). Interacts with ULK1, BECN1 and with ATG8 family members, including GABARAP, GABARAPL1, GABARAPL2 and MAP1LC3C/LC3C. Interacts with TRIM21 and SQSTM1/sequestosome 1. Interacts with IRF3. Interacts (via the SPRY domain) with NMI (via coiled-coil domain); the interaction promotes 'Lys-63'-linked ubiquitination of NMI. Interacts with IFI35 and NMI; the interaction facilitates NMI-IFI35 complex formation. Post-translationally, autoubiquitinated; does not lead to its proteasomal degradation. Deubiquitinated by USP4; leading to its stabilization.

The protein resides in the cytoplasm. It localises to the cytoplasmic vesicle. The protein localises to the autophagosome. Its subcellular location is the nucleus. It is found in the P-body. The protein resides in the stress granule. The catalysed reaction is S-ubiquitinyl-[E2 ubiquitin-conjugating enzyme]-L-cysteine + [acceptor protein]-L-lysine = [E2 ubiquitin-conjugating enzyme]-L-cysteine + N(6)-ubiquitinyl-[acceptor protein]-L-lysine.. It participates in protein modification; protein ubiquitination. E3 ubiquitin-protein ligase whose activity is dependent on E2 enzymes, UBE2D1, UBE2D2, UBE2E1 and UBE2E2. Forms a ubiquitin ligase complex in cooperation with the E2 UBE2D2 that is used not only for the ubiquitination of USP4 and IKBKB but also for its self-ubiquitination. Component of cullin-RING-based SCF (SKP1-CUL1-F-box protein) E3 ubiquitin-protein ligase complexes such as SCF(SKP2)-like complexes. A TRIM21-containing SCF(SKP2)-like complex is shown to mediate ubiquitination of CDKN1B ('Thr-187' phosphorylated-form), thereby promoting its degradation by the proteasome. Monoubiquitinates IKBKB that will negatively regulates Tax-induced NF-kappa-B signaling. Negatively regulates IFN-beta production post-pathogen recognition by catalyzing polyubiquitin-mediated degradation of IRF3. Mediates the ubiquitin-mediated proteasomal degradation of IgG1 heavy chain, which is linked to the VCP-mediated ER-associated degradation (ERAD) pathway. Promotes IRF8 ubiquitination, which enhanced the ability of IRF8 to stimulate cytokine genes transcription in macrophages. Plays a role in the regulation of the cell cycle progression. Enhances the decapping activity of DCP2. Exists as a ribonucleoprotein particle present in all mammalian cells studied and composed of a single polypeptide and one of four small RNA molecules. At least two isoforms are present in nucleated and red blood cells, and tissue specific differences in RO/SSA proteins have been identified. The common feature of these proteins is their ability to bind HY RNAs.2. Involved in the regulation of innate immunity and the inflammatory response in response to IFNG/IFN-gamma. Organizes autophagic machinery by serving as a platform for the assembly of ULK1, Beclin 1/BECN1 and ATG8 family members and recognizes specific autophagy targets, thus coordinating target recognition with assembly of the autophagic apparatus and initiation of autophagy. Also regulates autophagy through FIP200/RB1CC1 ubiquitination and subsequent decreased protein stability. Represses the innate antiviral response by facilitating the formation of the NMI-IFI35 complex through 'Lys-63'-linked ubiquitination of NMI. During viral infection, promotes cell pyroptosis by mediating 'Lys-6'-linked ubiquitination of ISG12a/IFI27, facilitating its translocation into the mitochondria and subsequent CASP3 activation. When up-regulated through the IFN/JAK/STAT signaling pathway, promotes 'Lys-27'-linked ubiquitination of MAVS, leading to the recruitment of TBK1 and up-regulation of innate immunity. Mediates 'Lys-63'-linked polyubiquitination of G3BP1 in response to heat shock, leading to stress granule disassembly. The sequence is that of E3 ubiquitin-protein ligase TRIM21 (TRIM21) from Bos taurus (Bovine).